The primary structure comprises 722 residues: ORC ubiquitin ligase 1 (722 aa).

The RING-type; degenerate zinc finger occupies 18–56 (CHICLGKVRQPVVCTNNHVFCSICIDLWLKNNSQCPACR). Coiled-coil stretches lie at residues 87–129 (LRKT…TILD) and 157–267 (VVEW…KEDV). Position 210 is a phosphoserine (Ser210). The tract at residues 273-359 (RAPSADSKGP…RLGARETPMD (87 aa)) is disordered. The span at 302–319 (AGSASASHLASPSSSRLA) shows a compositional bias: low complexity. Positions 323–338 (SVRQESTSRTEPNCPQ) are enriched in polar residues. The segment covering 339-359 (NKDRYPKPTEPRLGARETPMD) has biased composition (basic and acidic residues). Ser522, Ser549, Ser557, Ser564, and Ser566 each carry phosphoserine. The segment covering 541 to 555 (MSESDNSKSPCNNGF) has biased composition (polar residues). Disordered regions lie at residues 541–585 (MSES…GSKL) and 691–722 (VPEKRSKNGNQSTKRKIQSSLANASPSKATKS). Residues 571–581 (EFLEEPDKLQE) are compositionally biased toward basic and acidic residues. Residues 698-722 (NGNQSTKRKIQSSLANASPSKATKS) show a composition bias toward polar residues. 2 positions are modified to phosphoserine: Ser715 and Ser717.

In terms of assembly, associates with ORC complex. Binds to chromatin; association is cell cycle-regulated, absent from mitotic chromosomes, is associated with chromatin from G1 and partially released from chromatin from mid S-phase. Post-translationally, auto-ubiquitinated.

The protein localises to the chromosome. It carries out the reaction S-ubiquitinyl-[E2 ubiquitin-conjugating enzyme]-L-cysteine + [acceptor protein]-L-lysine = [E2 ubiquitin-conjugating enzyme]-L-cysteine + N(6)-ubiquitinyl-[acceptor protein]-L-lysine.. E3 ubiquitin ligase essential for DNA replication origin activation during S phase. Acts as a replication origin selector which selects the origins to be fired and catalyzes the multi-mono-ubiquitination of a subset of chromatin-bound ORC3 and ORC5 during S-phase. This is ORC ubiquitin ligase 1 from Mus musculus (Mouse).